The primary structure comprises 369 residues: 2-aminoethylphosphonate--pyruvate transaminase (369 aa).

Lys-193 carries the N6-(pyridoxal phosphate)lysine modification.

Belongs to the class-V pyridoxal-phosphate-dependent aminotransferase family. PhnW subfamily. As to quaternary structure, homodimer. It depends on pyridoxal 5'-phosphate as a cofactor.

The enzyme catalyses (2-aminoethyl)phosphonate + pyruvate = phosphonoacetaldehyde + L-alanine. Involved in phosphonate degradation. The chain is 2-aminoethylphosphonate--pyruvate transaminase from Burkholderia pseudomallei (strain 1106a).